An 84-amino-acid chain; its full sequence is Putative pelota-like protein YCL001W-B (84 aa).

Belongs to the eukaryotic release factor 1 family. Pelota subfamily. Highly divergent.

This Saccharomyces cerevisiae (strain ATCC 204508 / S288c) (Baker's yeast) protein is Putative pelota-like protein YCL001W-B.